A 124-amino-acid polypeptide reads, in one-letter code: Small ribosomal subunit protein uS12 (124 aa).

3-methylthioaspartic acid is present on Asp-89.

Belongs to the universal ribosomal protein uS12 family. As to quaternary structure, part of the 30S ribosomal subunit. Contacts proteins S8 and S17. May interact with IF1 in the 30S initiation complex.

With S4 and S5 plays an important role in translational accuracy. Functionally, interacts with and stabilizes bases of the 16S rRNA that are involved in tRNA selection in the A site and with the mRNA backbone. Located at the interface of the 30S and 50S subunits, it traverses the body of the 30S subunit contacting proteins on the other side and probably holding the rRNA structure together. The combined cluster of proteins S8, S12 and S17 appears to hold together the shoulder and platform of the 30S subunit. The sequence is that of Small ribosomal subunit protein uS12 from Shewanella denitrificans (strain OS217 / ATCC BAA-1090 / DSM 15013).